Here is a 180-residue protein sequence, read N- to C-terminus: Acireductone dioxygenase (180 aa).

The Fe(2+) site is built by His-99, His-101, Glu-105, and His-145. Residues His-99, His-101, Glu-105, and His-145 each coordinate Ni(2+).

The protein belongs to the acireductone dioxygenase (ARD) family. As to quaternary structure, monomer. Fe(2+) serves as cofactor. Ni(2+) is required as a cofactor.

It carries out the reaction 1,2-dihydroxy-5-(methylsulfanyl)pent-1-en-3-one + O2 = 3-(methylsulfanyl)propanoate + CO + formate + 2 H(+). The catalysed reaction is 1,2-dihydroxy-5-(methylsulfanyl)pent-1-en-3-one + O2 = 4-methylsulfanyl-2-oxobutanoate + formate + 2 H(+). Its pathway is amino-acid biosynthesis; L-methionine biosynthesis via salvage pathway; L-methionine from S-methyl-5-thio-alpha-D-ribose 1-phosphate: step 5/6. In terms of biological role, catalyzes 2 different reactions between oxygen and the acireductone 1,2-dihydroxy-3-keto-5-methylthiopentene (DHK-MTPene) depending upon the metal bound in the active site. Fe-containing acireductone dioxygenase (Fe-ARD) produces formate and 2-keto-4-methylthiobutyrate (KMTB), the alpha-ketoacid precursor of methionine in the methionine recycle pathway. Ni-containing acireductone dioxygenase (Ni-ARD) produces methylthiopropionate, carbon monoxide and formate, and does not lie on the methionine recycle pathway. This is Acireductone dioxygenase from Geobacillus thermodenitrificans (strain NG80-2).